Reading from the N-terminus, the 72-residue chain is Translation initiation factor IF-1 (72 aa).

One can recognise an S1-like domain in the interval 1–72; sequence MAKEESIEIE…SKGRITYRYK (72 aa).

This sequence belongs to the IF-1 family. In terms of assembly, component of the 30S ribosomal translation pre-initiation complex which assembles on the 30S ribosome in the order IF-2 and IF-3, IF-1 and N-formylmethionyl-tRNA(fMet); mRNA recruitment can occur at any time during PIC assembly.

It localises to the cytoplasm. In terms of biological role, one of the essential components for the initiation of protein synthesis. Stabilizes the binding of IF-2 and IF-3 on the 30S subunit to which N-formylmethionyl-tRNA(fMet) subsequently binds. Helps modulate mRNA selection, yielding the 30S pre-initiation complex (PIC). Upon addition of the 50S ribosomal subunit IF-1, IF-2 and IF-3 are released leaving the mature 70S translation initiation complex. In Chlorobium phaeovibrioides (strain DSM 265 / 1930) (Prosthecochloris vibrioformis (strain DSM 265)), this protein is Translation initiation factor IF-1.